Reading from the N-terminus, the 730-residue chain is Polyribonucleotide nucleotidyltransferase (730 aa).

Mg(2+)-binding residues include Asp-494 and Asp-500. One can recognise a KH domain in the interval Pro-561–Ile-622. The 70-residue stretch at Gly-642–Lys-711 folds into the S1 motif domain.

It belongs to the polyribonucleotide nucleotidyltransferase family. The cofactor is Mg(2+).

It localises to the cytoplasm. It catalyses the reaction RNA(n+1) + phosphate = RNA(n) + a ribonucleoside 5'-diphosphate. Involved in mRNA degradation. Catalyzes the phosphorolysis of single-stranded polyribonucleotides processively in the 3'- to 5'-direction. This chain is Polyribonucleotide nucleotidyltransferase, found in Opitutus terrae (strain DSM 11246 / JCM 15787 / PB90-1).